We begin with the raw amino-acid sequence, 353 residues long: Mitochondrial ubiquitin ligase activator of nfkb 1 (353 aa).

At 1 to 8 (MENGGRPS) the chain is on the cytoplasmic side. A helical membrane pass occupies residues 9-29 (VGQVILLTTSSAITALFYSIY). Over 30 to 239 (RHKYRSVQTL…LLEKQEVQMR (210 aa)) the chain is Mitochondrial intermembrane. Residues 240–260 (WWRILSIVFGVASCITLFFIL) traverse the membrane as a helical segment. Residues 261 to 353 (RRKYRHYKEK…IDRIVPLYNS (93 aa)) lie on the Cytoplasmic side of the membrane. The RING-type zinc finger occupies 303–341 (CSICLSTEKSCVFLECGHVCSCISCYQALPSPKKCPICR).

In terms of assembly, homooligomer.

The protein resides in the mitochondrion outer membrane. It catalyses the reaction S-ubiquitinyl-[E2 ubiquitin-conjugating enzyme]-L-cysteine + [acceptor protein]-L-lysine = [E2 ubiquitin-conjugating enzyme]-L-cysteine + N(6)-ubiquitinyl-[acceptor protein]-L-lysine.. The protein operates within protein modification; protein ubiquitination. Its function is as follows. E3 ubiquitin-protein ligase that plays a role in the control of mitochondrial morphology. Promotes mitochondrial fragmentation and influences mitochondrial localization. Inhibits cell growth. E3 ubiquitin ligases accept ubiquitin from an E2 ubiquitin-conjugating enzyme in the form of a thioester and then directly transfer the ubiquitin to targeted substrates. The chain is Mitochondrial ubiquitin ligase activator of nfkb 1 (mul1) from Xenopus laevis (African clawed frog).